Reading from the N-terminus, the 339-residue chain is tRNA pseudouridine synthase D (339 aa).

Aspartate 80 serves as the catalytic Nucleophile. A TRUD domain is found at 155 to 311; that stretch reads GFPNYFTEQR…AKGFSWAFEP (157 aa).

The protein belongs to the pseudouridine synthase TruD family.

The catalysed reaction is uridine(13) in tRNA = pseudouridine(13) in tRNA. Its function is as follows. Responsible for synthesis of pseudouridine from uracil-13 in transfer RNAs. This is tRNA pseudouridine synthase D from Haemophilus influenzae (strain 86-028NP).